Here is a 145-residue protein sequence, read N- to C-terminus: Arginine repressor (145 aa).

It belongs to the ArgR family.

The protein localises to the cytoplasm. It functions in the pathway amino-acid biosynthesis; L-arginine biosynthesis [regulation]. Regulates arginine biosynthesis genes. The chain is Arginine repressor from Streptococcus equi subsp. zooepidemicus (strain H70).